Consider the following 612-residue polypeptide: Indole-3-acetic acid-amido synthetase GH3.5 (612 aa).

Belongs to the IAA-amido conjugating enzyme family.

In terms of biological role, catalyzes the synthesis of indole-3-acetic acid (IAA)-amino acid conjugates, providing a mechanism for the plant to cope with the presence of excess auxin. Strongly reactive with Glu, Gln, Trp, Asp, Ala, Leu, Phe, Gly, Tyr, Met, Ile and Val. Little or no product formation with His, Ser, Thr, Arg, Lys, or Cys. Also active on pyruvic and butyric acid analogs of IAA, PAA and the synthetic auxin naphthaleneacetic acid (NAA). The two chlorinated synthetic auxin herbicides 2,4-D and 3,6-dichloro-o-anisic acid (dicamba) cannot be used as substrates. In Arabidopsis thaliana (Mouse-ear cress), this protein is Indole-3-acetic acid-amido synthetase GH3.5 (GH3.5).